The chain runs to 690 residues: Lipase 2 (690 aa).

Residues 1–37 (MLRGQEERKYSIRKYSIGVVSVLAATMFVVSSHEAQA) form the signal peptide. The propeptide occupies 38–295 (SEKTPTNAAV…ADAKKVRPLK (258 aa)). Polar residues predominate over residues 53-71 (NQPGEQGNAITSHQMQSGK). Residues 53–266 (NQPGEQGNAI…KPTDKNTDNK (214 aa)) are disordered. The span at 72–81 (QLDDMHKENG) shows a compositional bias: basic and acidic residues. Polar residues-rich tracts occupy residues 93–114 (LQLS…NDNQ), 124–171 (SKQS…QPSI), and 185–206 (PTST…AQDA). Basic and acidic residues-rich tracts occupy residues 225–237 (IDAK…RQSE) and 257–266 (KPTDKNTDNK). Catalysis depends on serine 412, which acts as the Nucleophile. Glycine 579 is a Ca(2+) binding site. Aspartate 603 (charge relay system) is an active-site residue. Aspartate 644 contacts Ca(2+). Catalysis depends on histidine 645, which acts as the Charge relay system. Ca(2+)-binding residues include aspartate 647, aspartate 652, and aspartate 655.

This sequence belongs to the AB hydrolase superfamily. Lipase family.

Its subcellular location is the secreted. The catalysed reaction is a triacylglycerol + H2O = a diacylglycerol + a fatty acid + H(+). In Staphylococcus aureus (strain MSSA476), this protein is Lipase 2 (lip2).